We begin with the raw amino-acid sequence, 134 residues long: Protein Turandot E (134 aa).

An N-terminal signal peptide occupies residues Met-1–Cys-38.

Belongs to the Turandot family.

It localises to the secreted. In terms of biological role, a humoral factor that may play a role in stress tolerance. The sequence is that of Protein Turandot E from Drosophila melanogaster (Fruit fly).